The primary structure comprises 128 residues: Large ribosomal subunit protein uL22 (128 aa).

The protein belongs to the universal ribosomal protein uL22 family. As to quaternary structure, part of the 50S ribosomal subunit.

In terms of biological role, this protein binds specifically to 23S rRNA; its binding is stimulated by other ribosomal proteins, e.g. L4, L17, and L20. It is important during the early stages of 50S assembly. It makes multiple contacts with different domains of the 23S rRNA in the assembled 50S subunit and ribosome. Its function is as follows. The globular domain of the protein is located near the polypeptide exit tunnel on the outside of the subunit, while an extended beta-hairpin is found that lines the wall of the exit tunnel in the center of the 70S ribosome. The polypeptide is Large ribosomal subunit protein uL22 (Prochlorococcus marinus (strain MIT 9515)).